The chain runs to 425 residues: Serine--tRNA ligase (425 aa).

The interval 110–134 is disordered; it reads NLPSADAPEGKSEADNVEVKRWGEP. A compositionally biased stretch (basic and acidic residues) spans 117–134; it reads PEGKSEADNVEVKRWGEP. Residue 233–235 coordinates L-serine; it reads TAE. Residue 264–266 coordinates ATP; sequence RRE. Position 287 (glutamate 287) interacts with L-serine. ATP is bound at residue 351-354; sequence EISS. An L-serine-binding site is contributed by serine 385.

It belongs to the class-II aminoacyl-tRNA synthetase family. Type-1 seryl-tRNA synthetase subfamily. As to quaternary structure, homodimer. The tRNA molecule binds across the dimer.

The protein localises to the cytoplasm. The enzyme catalyses tRNA(Ser) + L-serine + ATP = L-seryl-tRNA(Ser) + AMP + diphosphate + H(+). It catalyses the reaction tRNA(Sec) + L-serine + ATP = L-seryl-tRNA(Sec) + AMP + diphosphate + H(+). The protein operates within aminoacyl-tRNA biosynthesis; selenocysteinyl-tRNA(Sec) biosynthesis; L-seryl-tRNA(Sec) from L-serine and tRNA(Sec): step 1/1. Catalyzes the attachment of serine to tRNA(Ser). Is also able to aminoacylate tRNA(Sec) with serine, to form the misacylated tRNA L-seryl-tRNA(Sec), which will be further converted into selenocysteinyl-tRNA(Sec). This is Serine--tRNA ligase from Synechococcus sp. (strain RCC307).